A 225-amino-acid polypeptide reads, in one-letter code: Urease accessory protein UreG (225 aa).

25-32 (GPVGAGKT) lines the GTP pocket.

The protein belongs to the SIMIBI class G3E GTPase family. UreG subfamily. Homodimer. UreD, UreF and UreG form a complex that acts as a GTP-hydrolysis-dependent molecular chaperone, activating the urease apoprotein by helping to assemble the nickel containing metallocenter of UreC. The UreE protein probably delivers the nickel.

It is found in the cytoplasm. Its function is as follows. Facilitates the functional incorporation of the urease nickel metallocenter. This process requires GTP hydrolysis, probably effectuated by UreG. The protein is Urease accessory protein UreG of Haemophilus influenzae (strain 86-028NP).